The chain runs to 277 residues: 4-hydroxy-3-methylbut-2-enyl diphosphate reductase (277 aa).

[4Fe-4S] cluster is bound at residue C12. Residues H36 and H70 each contribute to the (2E)-4-hydroxy-3-methylbut-2-enyl diphosphate site. Residues H36 and H70 each coordinate dimethylallyl diphosphate. 2 residues coordinate isopentenyl diphosphate: H36 and H70. C92 contributes to the [4Fe-4S] cluster binding site. A (2E)-4-hydroxy-3-methylbut-2-enyl diphosphate-binding site is contributed by H120. H120 lines the dimethylallyl diphosphate pocket. H120 is an isopentenyl diphosphate binding site. Residue E122 is the Proton donor of the active site. (2E)-4-hydroxy-3-methylbut-2-enyl diphosphate is bound at residue T158. C186 serves as a coordination point for [4Fe-4S] cluster. (2E)-4-hydroxy-3-methylbut-2-enyl diphosphate contacts are provided by S214, N216, and S258. Positions 214, 216, and 258 each coordinate dimethylallyl diphosphate. The isopentenyl diphosphate site is built by S214, N216, and S258.

It belongs to the IspH family. [4Fe-4S] cluster is required as a cofactor.

It carries out the reaction isopentenyl diphosphate + 2 oxidized [2Fe-2S]-[ferredoxin] + H2O = (2E)-4-hydroxy-3-methylbut-2-enyl diphosphate + 2 reduced [2Fe-2S]-[ferredoxin] + 2 H(+). The catalysed reaction is dimethylallyl diphosphate + 2 oxidized [2Fe-2S]-[ferredoxin] + H2O = (2E)-4-hydroxy-3-methylbut-2-enyl diphosphate + 2 reduced [2Fe-2S]-[ferredoxin] + 2 H(+). The protein operates within isoprenoid biosynthesis; dimethylallyl diphosphate biosynthesis; dimethylallyl diphosphate from (2E)-4-hydroxy-3-methylbutenyl diphosphate: step 1/1. It participates in isoprenoid biosynthesis; isopentenyl diphosphate biosynthesis via DXP pathway; isopentenyl diphosphate from 1-deoxy-D-xylulose 5-phosphate: step 6/6. Its function is as follows. Catalyzes the conversion of 1-hydroxy-2-methyl-2-(E)-butenyl 4-diphosphate (HMBPP) into a mixture of isopentenyl diphosphate (IPP) and dimethylallyl diphosphate (DMAPP). Acts in the terminal step of the DOXP/MEP pathway for isoprenoid precursor biosynthesis. The protein is 4-hydroxy-3-methylbut-2-enyl diphosphate reductase of Campylobacter jejuni subsp. jejuni serotype O:23/36 (strain 81-176).